We begin with the raw amino-acid sequence, 181 residues long: Large ribosomal subunit protein uL5 (181 aa).

It belongs to the universal ribosomal protein uL5 family. In terms of assembly, part of the 50S ribosomal subunit; contacts the 5S rRNA and probably tRNA. Forms a bridge to the 30S subunit in the 70S ribosome.

Its function is as follows. This is one of the proteins that bind and probably mediate the attachment of the 5S RNA into the large ribosomal subunit, where it forms part of the central protuberance. In the 70S ribosome it contacts protein S13 of the 30S subunit (bridge B1b), connecting the 2 subunits; this bridge is implicated in subunit movement. May contact the P site tRNA; the 5S rRNA and some of its associated proteins might help stabilize positioning of ribosome-bound tRNAs. In Methanococcus maripaludis (strain C6 / ATCC BAA-1332), this protein is Large ribosomal subunit protein uL5.